Reading from the N-terminus, the 72-residue chain is Prokaryotic ubiquitin-like protein Pup (72 aa).

Gly residues predominate over residues 1–10 (MATKDTGGGQ). The tract at residues 1–45 (MATKDTGGGQQKATRSTEEVEEQAQDAQASEDLAERQEKLSDDVD) is disordered. The stretch at 10 to 60 (QQKATRSTEEVEEQAQDAQASEDLAERQEKLSDDVDSVLDEIDDVLEENAE) forms a coiled coil. Residues 28-66 (QASEDLAERQEKLSDDVDSVLDEIDDVLEENAEDFVRSF) form an ARC ATPase binding region. Basic and acidic residues predominate over residues 33–42 (LAERQEKLSD). At Gln72 the chain carries Deamidated glutamine. An Isoglutamyl lysine isopeptide (Gln-Lys) (interchain with K-? in acceptor proteins) cross-link involves residue Gln72.

It belongs to the prokaryotic ubiquitin-like protein family. As to quaternary structure, strongly interacts with the proteasome-associated ATPase ARC through a hydrophobic interface; the interacting region of Pup lies in its C-terminal half. There is one Pup binding site per ARC hexamer ring. Post-translationally, is modified by deamidation of its C-terminal glutamine to glutamate by the deamidase Dop, a prerequisite to the subsequent pupylation process.

Its pathway is protein degradation; proteasomal Pup-dependent pathway. Protein modifier that is covalently attached to lysine residues of substrate proteins, thereby targeting them for proteasomal degradation. The tagging system is termed pupylation. This is Prokaryotic ubiquitin-like protein Pup from Streptomyces griseus subsp. griseus (strain JCM 4626 / CBS 651.72 / NBRC 13350 / KCC S-0626 / ISP 5235).